A 311-amino-acid polypeptide reads, in one-letter code: GTPase Era (311 aa).

The Era-type G domain occupies Arg-18–Asn-185. A G1 region spans residues Gly-26–Ser-33. Residue Gly-26 to Ser-33 participates in GTP binding. The tract at residues Gln-52–Ala-56 is G2. The segment at Asp-73–Gly-76 is G3. GTP-binding positions include Asp-73 to Ile-77 and Asn-135 to Asp-138. The interval Asn-135–Asp-138 is G4. The interval Ile-164 to Ala-166 is G5. Residues Leu-216 to Glu-293 form the KH type-2 domain.

The protein belongs to the TRAFAC class TrmE-Era-EngA-EngB-Septin-like GTPase superfamily. Era GTPase family. As to quaternary structure, monomer.

The protein resides in the cytoplasm. It localises to the cell inner membrane. Functionally, an essential GTPase that binds both GDP and GTP, with rapid nucleotide exchange. Plays a role in 16S rRNA processing and 30S ribosomal subunit biogenesis and possibly also in cell cycle regulation and energy metabolism. The polypeptide is GTPase Era (Brucella melitensis biotype 1 (strain ATCC 23456 / CCUG 17765 / NCTC 10094 / 16M)).